The primary structure comprises 1002 residues: Isoleucine--tRNA ligase (1002 aa).

The 'HIGH' region motif lies at Pro70–His80. Glu630 is a binding site for L-isoleucyl-5'-AMP. The 'KMSKS' region motif lies at Lys671–Ser675. Residue Lys674 participates in ATP binding.

The protein belongs to the class-I aminoacyl-tRNA synthetase family. IleS type 1 subfamily. In terms of assembly, monomer.

Its subcellular location is the cytoplasm. The enzyme catalyses tRNA(Ile) + L-isoleucine + ATP = L-isoleucyl-tRNA(Ile) + AMP + diphosphate. Functionally, catalyzes the attachment of isoleucine to tRNA(Ile). As IleRS can inadvertently accommodate and process structurally similar amino acids such as valine, to avoid such errors it has two additional distinct tRNA(Ile)-dependent editing activities. One activity is designated as 'pretransfer' editing and involves the hydrolysis of activated Val-AMP. The other activity is designated 'posttransfer' editing and involves deacylation of mischarged Val-tRNA(Ile). The chain is Isoleucine--tRNA ligase from Bradyrhizobium diazoefficiens (strain JCM 10833 / BCRC 13528 / IAM 13628 / NBRC 14792 / USDA 110).